The primary structure comprises 309 residues: MFSPADNIFIILITGEFILGILGNGYIALVNWIDWIKKKKISTVDYILTNLVIARICLISVMVVNGIVIVLNPDVYTKNKQQIVIFTFWTFANYLNMWITTCLNVFYFLKIASSSHPLFLWLKWKIDMVVHWILLGCFAISLLVSLIAAIVLSCDYRFHAIAKHKRNITEMFXVSKIPYFEPLTLFNLFAIVPFIVSLISFFLLVRSLWRHTKQIKLYATGSRDPSTEVHVRAIKTMTSFIFFFFLYFISSILMTFSYLMTKYKLAVEFGEIAAILYPLGHSLILIVLNNKLRQIFVRMLTCRKIACVI.

At 1–7 the chain is on the extracellular side; it reads MFSPADN. A helical transmembrane segment spans residues 8-28; the sequence is IFIILITGEFILGILGNGYIA. At 29 to 50 the chain is on the cytoplasmic side; the sequence is LVNWIDWIKKKKISTVDYILTN. The helical transmembrane segment at 51 to 71 threads the bilayer; the sequence is LVIARICLISVMVVNGIVIVL. The Extracellular portion of the chain corresponds to 72-82; sequence NPDVYTKNKQQ. The chain crosses the membrane as a helical span at residues 83 to 103; the sequence is IVIFTFWTFANYLNMWITTCL. At 104–131 the chain is on the cytoplasmic side; that stretch reads NVFYFLKIASSSHPLFLWLKWKIDMVVH. A helical transmembrane segment spans residues 132 to 152; it reads WILLGCFAISLLVSLIAAIVL. Topologically, residues 153–184 are extracellular; sequence SCDYRFHAIAKHKRNITEMFXVSKIPYFEPLT. Asparagine 167 carries N-linked (GlcNAc...) asparagine glycosylation. Residues 185–205 form a helical membrane-spanning segment; it reads LFNLFAIVPFIVSLISFFLLV. Topologically, residues 206 to 239 are cytoplasmic; the sequence is RSLWRHTKQIKLYATGSRDPSTEVHVRAIKTMTS. A helical membrane pass occupies residues 240–260; that stretch reads FIFFFFLYFISSILMTFSYLM. The Extracellular portion of the chain corresponds to 261-266; that stretch reads TKYKLA. A helical transmembrane segment spans residues 267–287; the sequence is VEFGEIAAILYPLGHSLILIV. The Cytoplasmic segment spans residues 288–309; the sequence is LNNKLRQIFVRMLTCRKIACVI.

It belongs to the G-protein coupled receptor T2R family.

The protein resides in the membrane. In terms of biological role, receptor that may play a role in the perception of bitterness and is gustducin-linked. May play a role in sensing the chemical composition of the gastrointestinal content. The activity of this receptor may stimulate alpha gustducin, mediate PLC-beta-2 activation and lead to the gating of TRPM5. The protein is Taste receptor type 2 member 8 (TAS2R8) of Pan troglodytes (Chimpanzee).